We begin with the raw amino-acid sequence, 758 residues long: Probable TonB-dependent receptor NMB0964 (758 aa).

Residues 1-24 (MAQTTLKPIVLSILLINTPLLAQA) form the signal peptide. The region spanning 50-161 (LLHTSTASDK…VAGLVDVADG (112 aa)) is the TBDR plug domain. One can recognise a TBDR beta-barrel domain in the interval 171–758 (GVSGELGLRL…SFTGGVNVKF (588 aa)). The TonB C-terminal box signature appears at 741-758 (SDTPQMGRSFTGGVNVKF).

It belongs to the TonB-dependent receptor family.

The protein resides in the cell outer membrane. Probable receptor, TonB-dependent. The protein is Probable TonB-dependent receptor NMB0964 of Neisseria meningitidis serogroup B (strain ATCC BAA-335 / MC58).